The sequence spans 64 residues: Small, acid-soluble spore protein D (64 aa).

This sequence belongs to the alpha/beta-type SASP family.

SASP are bound to spore DNA. They are double-stranded DNA-binding proteins that cause DNA to change to an a-like conformation. They protect the DNA backbone from chemical and enzymatic cleavage and are thus involved in dormant spore's high resistance to UV light. The polypeptide is Small, acid-soluble spore protein D (sspD) (Bacillus subtilis (strain 168)).